A 375-amino-acid chain; its full sequence is Serpin B5 (375 aa).

N-linked (GlcNAc...) asparagine glycosylation is found at Asn-99, Asn-133, Asn-188, Asn-298, and Asn-361.

It belongs to the serpin family. Ov-serpin subfamily. As to quaternary structure, interacts with IRF6.

It is found in the secreted. It localises to the extracellular space. In terms of biological role, tumor suppressor. It blocks the growth, invasion, and metastatic properties of mammary tumors. As it does not undergo the S (stressed) to R (relaxed) conformational transition characteristic of active serpins, it exhibits no serine protease inhibitory activity. This chain is Serpin B5 (Serpinb5), found in Rattus norvegicus (Rat).